Reading from the N-terminus, the 111-residue chain is Entry-fusion complex protein OPG086 (111 aa).

The helical; Signal-anchor transmembrane segment at 1–21 threads the bilayer; it reads MASLLYLILFLLFVCISYYFT. Residues 22 to 111 are Virion surface-facing; sequence YYPTNKLQAA…TLLPILLLSK (90 aa).

This sequence belongs to the orthopoxvirus OPG086 family. In terms of assembly, interacts with OPG099/L5. Component of the entry fusion complex (EFC) composed of OPG053, OPG076, OPG086, OPG094, OPG095, OPG099, OPG107, OPG143, OPG104, OPG147 and OPG155. Except for OPG095 and OPG053, each of the EFC proteins is required for assembly or stability of the complex. In terms of processing, unglycosylated because produced in viral factories instead of the classic ER -Golgi route.

The protein localises to the virion membrane. Functionally, component of the entry fusion complex (EFC), which consists of 11 proteins. During cell infection, this complex mediates entry of the virion core into the host cytoplasm by a two-step mechanism consisting of lipid mixing of the viral and cellular membranes and subsequent pore formation. This Vaccinia virus (strain Copenhagen) (VACV) protein is Entry-fusion complex protein OPG086 (OPG086).